The primary structure comprises 262 residues: tRNA pseudouridine synthase A (262 aa).

Catalysis depends on D51, which acts as the Nucleophile. Y109 is a binding site for substrate.

The protein belongs to the tRNA pseudouridine synthase TruA family. In terms of assembly, homodimer.

The catalysed reaction is uridine(38/39/40) in tRNA = pseudouridine(38/39/40) in tRNA. Its function is as follows. Formation of pseudouridine at positions 38, 39 and 40 in the anticodon stem and loop of transfer RNAs. The chain is tRNA pseudouridine synthase A from Actinobacillus pleuropneumoniae serotype 5b (strain L20).